Here is a 159-residue protein sequence, read N- to C-terminus: Eukaryotic translation initiation factor 5A (159 aa).

Basic and acidic residues predominate over residues 1-12 (MSDEEHQFESKA). A disordered region spans residues 1–23 (MSDEEHQFESKADAGASKTYPQQ). Lys52 bears the Hypusine mark.

This sequence belongs to the eIF-5A family. In terms of processing, lys-52 undergoes hypusination, a unique post-translational modification that consists in the addition of a butylamino group from spermidine to lysine side chain, leading to the formation of the unusual amino acid hypusine. eIF-5As are the only known proteins to undergo this modification, which is essential for their function.

Translation factor that promotes translation elongation and termination, particularly upon ribosome stalling at specific amino acid sequence contexts. Binds between the exit (E) and peptidyl (P) site of the ribosome and promotes rescue of stalled ribosome: specifically required for efficient translation of polyproline-containing peptides as well as other motifs that stall the ribosome. Acts as a ribosome quality control (RQC) cofactor by joining the RQC complex to facilitate peptidyl transfer during CAT tailing step. This chain is Eukaryotic translation initiation factor 5A (EIFSV1), found in Senecio vernalis (Spring groundsel).